The following is a 447-amino-acid chain: Tubulin beta-4 chain (447 aa).

GTP-binding residues include Gln-11, Glu-71, Ser-140, Gly-144, Thr-145, Gly-146, Asn-206, and Asn-228. Glu-71 contacts Mg(2+). A disordered region spans residues 428 to 447; it reads QDATAEEYEEEEHDGEEEHA. Acidic residues predominate over residues 431-447; that stretch reads TAEEYEEEEHDGEEEHA.

This sequence belongs to the tubulin family. Dimer of alpha and beta chains. A typical microtubule is a hollow water-filled tube with an outer diameter of 25 nm and an inner diameter of 15 nM. Alpha-beta heterodimers associate head-to-tail to form protofilaments running lengthwise along the microtubule wall with the beta-tubulin subunit facing the microtubule plus end conferring a structural polarity. Microtubules usually have 13 protofilaments but different protofilament numbers can be found in some organisms and specialized cells. Mg(2+) serves as cofactor.

The protein resides in the cytoplasm. It localises to the cytoskeleton. In terms of biological role, tubulin is the major constituent of microtubules, a cylinder consisting of laterally associated linear protofilaments composed of alpha- and beta-tubulin heterodimers. Microtubules grow by the addition of GTP-tubulin dimers to the microtubule end, where a stabilizing cap forms. Below the cap, tubulin dimers are in GDP-bound state, owing to GTPase activity of alpha-tubulin. This Zea mays (Maize) protein is Tubulin beta-4 chain (TUBB4).